The sequence spans 518 residues: GMP synthase [glutamine-hydrolyzing] (518 aa).

Positions 11–203 (SILVLDFGSQ…AFDVCQAEAN (193 aa)) constitute a Glutamine amidotransferase type-1 domain. C88 serves as the catalytic Nucleophile. Active-site residues include H177 and E179. A GMPS ATP-PPase domain is found at 204–393 (WSMDDFIDMQ…LGMPSDLVWR (190 aa)). 231-237 (SGGVDSS) contributes to the ATP binding site.

In terms of assembly, homodimer.

The catalysed reaction is XMP + L-glutamine + ATP + H2O = GMP + L-glutamate + AMP + diphosphate + 2 H(+). It participates in purine metabolism; GMP biosynthesis; GMP from XMP (L-Gln route): step 1/1. Its function is as follows. Catalyzes the synthesis of GMP from XMP. The protein is GMP synthase [glutamine-hydrolyzing] of Lactiplantibacillus plantarum (strain ATCC BAA-793 / NCIMB 8826 / WCFS1) (Lactobacillus plantarum).